The sequence spans 792 residues: Probable CoA-transferase Rv1866 (792 aa).

Catalysis depends on Asp558, which acts as the Nucleophile.

Belongs to the CoA-transferase III family.

Probable CoA-transferase. In Mycobacterium tuberculosis (strain ATCC 25618 / H37Rv), this protein is Probable CoA-transferase Rv1866.